The chain runs to 449 residues: Xylose isomerase (449 aa).

Residues His-103 and Asp-106 contribute to the active site. Mg(2+) is bound by residues Glu-234, Glu-270, His-273, Asp-298, Asp-309, Asp-311, and Asp-342.

The protein belongs to the xylose isomerase family. In terms of assembly, homotetramer. It depends on Mg(2+) as a cofactor.

The protein resides in the cytoplasm. The catalysed reaction is alpha-D-xylose = alpha-D-xylulofuranose. The protein is Xylose isomerase of Levilactobacillus brevis (strain ATCC 367 / BCRC 12310 / CIP 105137 / JCM 1170 / LMG 11437 / NCIMB 947 / NCTC 947) (Lactobacillus brevis).